The chain runs to 296 residues: 4-hydroxy-tetrahydrodipicolinate synthase (296 aa).

Residue Thr-49 coordinates pyruvate. Residue Tyr-137 is the Proton donor/acceptor of the active site. Lys-166 (schiff-base intermediate with substrate) is an active-site residue. Residue Ile-208 participates in pyruvate binding.

This sequence belongs to the DapA family. Homotetramer; dimer of dimers.

It is found in the cytoplasm. It carries out the reaction L-aspartate 4-semialdehyde + pyruvate = (2S,4S)-4-hydroxy-2,3,4,5-tetrahydrodipicolinate + H2O + H(+). It functions in the pathway amino-acid biosynthesis; L-lysine biosynthesis via DAP pathway; (S)-tetrahydrodipicolinate from L-aspartate: step 3/4. In terms of biological role, catalyzes the condensation of (S)-aspartate-beta-semialdehyde [(S)-ASA] and pyruvate to 4-hydroxy-tetrahydrodipicolinate (HTPA). This is 4-hydroxy-tetrahydrodipicolinate synthase from Chlorobium phaeovibrioides (strain DSM 265 / 1930) (Prosthecochloris vibrioformis (strain DSM 265)).